A 275-amino-acid polypeptide reads, in one-letter code: Phosphate import ATP-binding protein PstB (275 aa).

Residues 29 to 270 (LEIKDLDLYY…PNKKKTEDYI (242 aa)) form the ABC transporter domain. Residue 61–68 (GPSGCGKS) participates in ATP binding.

This sequence belongs to the ABC transporter superfamily. Phosphate importer (TC 3.A.1.7) family. As to quaternary structure, the complex is composed of two ATP-binding proteins (PstB), two transmembrane proteins (PstC and PstA) and a solute-binding protein (PstS).

The protein resides in the cell inner membrane. It catalyses the reaction phosphate(out) + ATP + H2O = ADP + 2 phosphate(in) + H(+). Functionally, part of the ABC transporter complex PstSACB involved in phosphate import. Responsible for energy coupling to the transport system. The sequence is that of Phosphate import ATP-binding protein PstB from Pseudoalteromonas translucida (strain TAC 125).